The following is a 248-amino-acid chain: Pyridoxine 5'-phosphate synthase (248 aa).

The 3-amino-2-oxopropyl phosphate site is built by Asn8 and Arg19. The active-site Proton acceptor is the His44. 1-deoxy-D-xylulose 5-phosphate-binding residues include Arg46 and His51. The active-site Proton acceptor is the Glu76. Thr106 provides a ligand contact to 1-deoxy-D-xylulose 5-phosphate. His200 functions as the Proton donor in the catalytic mechanism. 3-amino-2-oxopropyl phosphate contacts are provided by residues Asp201 and 223 to 224 (GH).

Belongs to the PNP synthase family. Homooctamer; tetramer of dimers.

The protein localises to the cytoplasm. The enzyme catalyses 3-amino-2-oxopropyl phosphate + 1-deoxy-D-xylulose 5-phosphate = pyridoxine 5'-phosphate + phosphate + 2 H2O + H(+). It functions in the pathway cofactor biosynthesis; pyridoxine 5'-phosphate biosynthesis; pyridoxine 5'-phosphate from D-erythrose 4-phosphate: step 5/5. Catalyzes the complicated ring closure reaction between the two acyclic compounds 1-deoxy-D-xylulose-5-phosphate (DXP) and 3-amino-2-oxopropyl phosphate (1-amino-acetone-3-phosphate or AAP) to form pyridoxine 5'-phosphate (PNP) and inorganic phosphate. This chain is Pyridoxine 5'-phosphate synthase, found in Chelativorans sp. (strain BNC1).